Reading from the N-terminus, the 141-residue chain is Hemoglobin subunit alpha-1 (141 aa).

Positions 1 to 141 (VLTDAEKKEV…VATVLTSKYR (141 aa)) constitute a Globin domain. His-58 lines the O2 pocket. His-87 lines the heme b pocket.

The protein belongs to the globin family. Heterotetramer of two alpha chains and two beta chains. Red blood cells.

Its function is as follows. Involved in oxygen transport from the lung to the various peripheral tissues. The sequence is that of Hemoglobin subunit alpha-1 from Tachyglossus aculeatus aculeatus (Southeast Australian short-beaked echidna).